We begin with the raw amino-acid sequence, 195 residues long: Probable molybdenum cofactor guanylyltransferase (195 aa).

GTP-binding positions include Leu-8–Gly-10, Lys-20, Asp-65, and Asp-96. Residue Asp-96 coordinates Mg(2+).

This sequence belongs to the MobA family. The cofactor is Mg(2+).

The protein localises to the cytoplasm. It catalyses the reaction Mo-molybdopterin + GTP + H(+) = Mo-molybdopterin guanine dinucleotide + diphosphate. Its function is as follows. Transfers a GMP moiety from GTP to Mo-molybdopterin (Mo-MPT) cofactor (Moco or molybdenum cofactor) to form Mo-molybdopterin guanine dinucleotide (Mo-MGD) cofactor. This Bacillus licheniformis (strain ATCC 14580 / DSM 13 / JCM 2505 / CCUG 7422 / NBRC 12200 / NCIMB 9375 / NCTC 10341 / NRRL NRS-1264 / Gibson 46) protein is Probable molybdenum cofactor guanylyltransferase.